The following is a 375-amino-acid chain: Histidine biosynthesis bifunctional protein HisB (375 aa).

Residues 1 to 168 form a histidinol-phosphatase region; the sequence is MTPILFVDRD…GIAHELADAP (168 aa). Residue D8 is the Nucleophile of the active site. Mg(2+) is bound by residues D8, D10, and D128. D10 (proton donor) is an active-site residue. The tract at residues 169 to 375 is imidazoleglycerol-phosphate dehydratase; that stretch reads RRAVVQRNTK…TALPTTKGAL (207 aa).

In the N-terminal section; belongs to the histidinol-phosphatase family. This sequence in the C-terminal section; belongs to the imidazoleglycerol-phosphate dehydratase family. The cofactor is Mg(2+).

The protein localises to the cytoplasm. The catalysed reaction is D-erythro-1-(imidazol-4-yl)glycerol 3-phosphate = 3-(imidazol-4-yl)-2-oxopropyl phosphate + H2O. It catalyses the reaction L-histidinol phosphate + H2O = L-histidinol + phosphate. The protein operates within amino-acid biosynthesis; L-histidine biosynthesis; L-histidine from 5-phospho-alpha-D-ribose 1-diphosphate: step 6/9. It functions in the pathway amino-acid biosynthesis; L-histidine biosynthesis; L-histidine from 5-phospho-alpha-D-ribose 1-diphosphate: step 8/9. The polypeptide is Histidine biosynthesis bifunctional protein HisB (Xanthomonas euvesicatoria pv. vesicatoria (strain 85-10) (Xanthomonas campestris pv. vesicatoria)).